The chain runs to 209 residues: Glycerol-3-phosphate acyltransferase (209 aa).

The next 5 membrane-spanning stretches (helical) occupy residues 4–24, 53–75, 80–102, 112–132, and 138–158; these read IAIG…AILI, LAAA…IGYG, PFWL…FFHF, LGAI…TWLL, and GYSS…VWWF.

This sequence belongs to the PlsY family. As to quaternary structure, probably interacts with PlsX.

It localises to the cell inner membrane. It carries out the reaction an acyl phosphate + sn-glycerol 3-phosphate = a 1-acyl-sn-glycero-3-phosphate + phosphate. Its pathway is lipid metabolism; phospholipid metabolism. Catalyzes the transfer of an acyl group from acyl-phosphate (acyl-PO(4)) to glycerol-3-phosphate (G3P) to form lysophosphatidic acid (LPA). This enzyme utilizes acyl-phosphate as fatty acyl donor, but not acyl-CoA or acyl-ACP. The sequence is that of Glycerol-3-phosphate acyltransferase from Sodalis glossinidius (strain morsitans).